The primary structure comprises 171 residues: Protein-export protein SecB (171 aa).

The protein belongs to the SecB family. As to quaternary structure, homotetramer, a dimer of dimers. One homotetramer interacts with 1 SecA dimer.

Its subcellular location is the cytoplasm. Its function is as follows. One of the proteins required for the normal export of preproteins out of the cell cytoplasm. It is a molecular chaperone that binds to a subset of precursor proteins, maintaining them in a translocation-competent state. It also specifically binds to its receptor SecA. The chain is Protein-export protein SecB from Histophilus somni (strain 2336) (Haemophilus somnus).